Consider the following 237-residue polypeptide: 7-cyano-7-deazaguanine synthase (237 aa).

9–19 (YSGGLDSTTCL) contacts ATP. Zn(2+) contacts are provided by Cys-189, Cys-199, Cys-202, and Cys-205.

The protein belongs to the QueC family. The cofactor is Zn(2+).

The enzyme catalyses 7-carboxy-7-deazaguanine + NH4(+) + ATP = 7-cyano-7-deazaguanine + ADP + phosphate + H2O + H(+). It participates in purine metabolism; 7-cyano-7-deazaguanine biosynthesis. Functionally, catalyzes the ATP-dependent conversion of 7-carboxy-7-deazaguanine (CDG) to 7-cyano-7-deazaguanine (preQ(0)). The sequence is that of 7-cyano-7-deazaguanine synthase from Geobacter metallireducens (strain ATCC 53774 / DSM 7210 / GS-15).